Reading from the N-terminus, the 464-residue chain is NADH dehydrogenase [ubiquinone] flavoprotein 1, mitochondrial (464 aa).

A mitochondrion-targeting transit peptide spans Met1–Phe20. The residue at position 81 (Lys81) is an N6-acetyllysine; alternate. Residue Lys81 is modified to N6-succinyllysine; alternate. Gly87–Gly96 is an NADH binding site. At Lys104 the chain carries N6-acetyllysine. Arg199–Thr247 lines the FMN pocket. Arg257 carries the post-translational modification Omega-N-methylarginine. Lys375 bears the N6-acetyllysine mark. [4Fe-4S] cluster-binding residues include Cys379, Cys382, Cys385, and Cys425.

Belongs to the complex I 51 kDa subunit family. As to quaternary structure, core subunit of respiratory chain NADH dehydrogenase (Complex I) which is composed of 45 different subunits. This is a component of the flavoprotein-sulfur (FP) fragment of the enzyme. Interacts with RAB5IF. FMN serves as cofactor. Requires [4Fe-4S] cluster as cofactor.

It localises to the mitochondrion inner membrane. It carries out the reaction a ubiquinone + NADH + 5 H(+)(in) = a ubiquinol + NAD(+) + 4 H(+)(out). Functionally, core subunit of the mitochondrial membrane respiratory chain NADH dehydrogenase (Complex I) which catalyzes electron transfer from NADH through the respiratory chain, using ubiquinone as an electron acceptor. Part of the peripheral arm of the enzyme, where the electrons from NADH are accepted by flavin mononucleotide (FMN) and then passed along a chain of iron-sulfur clusters by electron tunnelling to the final acceptor ubiquinone. Contains FMN, which is the initial electron acceptor as well as one iron-sulfur cluster. The polypeptide is NADH dehydrogenase [ubiquinone] flavoprotein 1, mitochondrial (Homo sapiens (Human)).